The following is a 439-amino-acid chain: 26S proteasome regulatory subunit 4 homolog (439 aa).

Residues 1 to 46 (MGNNQSQGQGDKGEKKDQPKYQPPPPPTQFGKKKKRRGAETSTKLP) are disordered. An ATP-binding site is contributed by 225–232 (GEPGTGKT).

This sequence belongs to the AAA ATPase family.

It is found in the cytoplasm. It localises to the nucleus. Its function is as follows. The 26S proteasome is involved in the ATP-dependent degradation of ubiquitinated proteins. The regulatory (or ATPase) complex confers ATP dependency and substrate specificity to the 26S complex. Plays an important role in regulating both growth and multicellular development. This is 26S proteasome regulatory subunit 4 homolog (psmC1) from Dictyostelium discoideum (Social amoeba).